The chain runs to 233 residues: 5'-methylthioadenosine/S-adenosylhomocysteine nucleosidase (233 aa).

The Proton acceptor role is filled by E12. Substrate is bound by residues G78, I156, and 177–178 (ME). D201 acts as the Proton donor in catalysis.

It belongs to the PNP/UDP phosphorylase family. MtnN subfamily.

The enzyme catalyses S-adenosyl-L-homocysteine + H2O = S-(5-deoxy-D-ribos-5-yl)-L-homocysteine + adenine. It catalyses the reaction S-methyl-5'-thioadenosine + H2O = 5-(methylsulfanyl)-D-ribose + adenine. It carries out the reaction 5'-deoxyadenosine + H2O = 5-deoxy-D-ribose + adenine. It functions in the pathway amino-acid biosynthesis; L-methionine biosynthesis via salvage pathway; S-methyl-5-thio-alpha-D-ribose 1-phosphate from S-methyl-5'-thioadenosine (hydrolase route): step 1/2. Its function is as follows. Catalyzes the irreversible cleavage of the glycosidic bond in both 5'-methylthioadenosine (MTA) and S-adenosylhomocysteine (SAH/AdoHcy) to adenine and the corresponding thioribose, 5'-methylthioribose and S-ribosylhomocysteine, respectively. Also cleaves 5'-deoxyadenosine, a toxic by-product of radical S-adenosylmethionine (SAM) enzymes, into 5-deoxyribose and adenine. The chain is 5'-methylthioadenosine/S-adenosylhomocysteine nucleosidase from Listeria monocytogenes serotype 4a (strain HCC23).